The following is a 378-amino-acid chain: Signal peptide peptidase (378 aa).

The disordered stretch occupies residues 1 to 27; sequence MDSAVSDPHNGSAEAGTPANGTTRPPS. Residues 1–31 lie on the Lumenal side of the membrane; sequence MDSAVSDPHNGSAEAGTPANGTTRPPSTPEG. 2 N-linked (GlcNAc...) asparagine glycosylation sites follow: Asn10 and Asn20. The chain crosses the membrane as a helical span at residues 32–52; it reads IALAYGSLLLMALLPIFFGAL. At 53 to 77 the chain is on the cytoplasmic side; it reads RSVRCARGKSSSDMPETITSRDAAR. Residues 78-98 form a helical membrane-spanning segment; it reads FPIIASCTLLGLYLFFKIFSQ. The Lumenal portion of the chain corresponds to 99–100; sequence EY. Residues 101–121 traverse the membrane as a helical segment; that stretch reads INLLLSMYFFVLGILALSHTI. Topologically, residues 122 to 157 are cytoplasmic; that stretch reads SPFMNKFFPANFPNRQYQLLFTQGSGENKEEIINYE. Residues 158–178 form a helical membrane-spanning segment; sequence FDTKDLVCLGLSSVVGVWYLL. Topologically, residues 179–181 are lumenal; that stretch reads RKH. Residues 182 to 202 form a helical membrane-spanning segment; sequence WIANNLFGLAFSLNGVELLHL. Residues 203 to 209 lie on the Cytoplasmic side of the membrane; that stretch reads NNVSTGC. A helical membrane pass occupies residues 210 to 230; that stretch reads ILLGGLFIYDIFWVFGTNVMV. The active site involves Asp219. At 231–256 the chain is on the lumenal side; it reads TVAKSFEAPIKLVFPQDLLEKGLEAD. The helical transmembrane segment at 257–277 threads the bilayer; that stretch reads NFAMLGLGDIVIPGIFIALLL. The active site involves Asp265. Over 278–290 the chain is Cytoplasmic; it reads RFDISLKKNTHTY. A helical transmembrane segment spans residues 291-311; that stretch reads FYTSFAAYIFGLGLTIFIMHI. Over 312-314 the chain is Lumenal; it reads FKH. The chain crosses the membrane as a helical span at residues 315–335; it reads AQPALLYLVPACIGFPVLVAL. The short motif at 317–319 is the PAL element; the sequence is PAL. The Cytoplasmic portion of the chain corresponds to 336–378; it reads AKGEVAEMFSYEESNPKDPAAETESKEESTEASASKRLEKKEK. Positions 346-378 are disordered; it reads YEESNPKDPAAETESKEESTEASASKRLEKKEK. The span at 349–378 shows a compositional bias: basic and acidic residues; that stretch reads SNPKDPAAETESKEESTEASASKRLEKKEK. The residue at position 368 (Ser368) is a Phosphoserine.

It belongs to the peptidase A22B family. As to quaternary structure, monomer. Homodimer. Interacts with RNF139. Interacts with DERL1 and XBP1 isoform 1. Widely expressed with highest levels in liver and kidney. In the brain, expressed predominantly in hippocampus, amygdala, piriform cortex, choroid plexus and arcuate nucleus of the hypothalamic area. Isoform 1 is more strongly expressed than isoform 4 in most tissues except brain and skeletal muscle where isoform 4 is the dominant isoform and in testis where isoform 1 and isoform 4 are expressed at similar levels. In the brain, isoform 4 is not detected in the choroid plexus.

Its subcellular location is the endoplasmic reticulum membrane. The protein resides in the membrane. The protein localises to the cell membrane. Functionally, catalyzes intramembrane proteolysis of signal peptides that have been removed from precursors of secretory and membrane proteins, resulting in the release of the fragment from the ER membrane into the cytoplasm. Required to generate lymphocyte cell surface (HLA-E) epitopes derived from MHC class I signal peptides. Involved in the intramembrane cleavage of the integral membrane protein PSEN1. Cleaves the integral membrane protein XBP1 isoform 1 in a DERL1/RNF139-dependent manner. May play a role in graft rejection. This Mus musculus (Mouse) protein is Signal peptide peptidase.